The primary structure comprises 212 residues: Pyridoxine/pyridoxamine 5'-phosphate oxidase (212 aa).

Substrate-binding positions include 8–11 and K66; that span reads RRTY. FMN contacts are provided by residues 61 to 66, 76 to 77, R82, K83, and Q105; these read RIVLLK and FT. The substrate site is built by Y123, R127, and S131. Residues 140-141 and W184 each bind FMN; that span reads QS. 190-192 contacts substrate; it reads RLH. Position 194 (R194) interacts with FMN.

It belongs to the pyridoxamine 5'-phosphate oxidase family. In terms of assembly, homodimer. The cofactor is FMN.

The enzyme catalyses pyridoxamine 5'-phosphate + O2 + H2O = pyridoxal 5'-phosphate + H2O2 + NH4(+). It carries out the reaction pyridoxine 5'-phosphate + O2 = pyridoxal 5'-phosphate + H2O2. Its pathway is cofactor metabolism; pyridoxal 5'-phosphate salvage; pyridoxal 5'-phosphate from pyridoxamine 5'-phosphate: step 1/1. It functions in the pathway cofactor metabolism; pyridoxal 5'-phosphate salvage; pyridoxal 5'-phosphate from pyridoxine 5'-phosphate: step 1/1. Catalyzes the oxidation of either pyridoxine 5'-phosphate (PNP) or pyridoxamine 5'-phosphate (PMP) into pyridoxal 5'-phosphate (PLP). The chain is Pyridoxine/pyridoxamine 5'-phosphate oxidase from Cupriavidus pinatubonensis (strain JMP 134 / LMG 1197) (Cupriavidus necator (strain JMP 134)).